Here is a 369-residue protein sequence, read N- to C-terminus: Flagellar P-ring protein (369 aa).

A signal peptide spans 1-22 (MIKLKQLIAATLLLSAAFGAHA).

The protein belongs to the FlgI family. As to quaternary structure, the basal body constitutes a major portion of the flagellar organelle and consists of four rings (L,P,S, and M) mounted on a central rod.

Its subcellular location is the periplasm. The protein localises to the bacterial flagellum basal body. Functionally, assembles around the rod to form the L-ring and probably protects the motor/basal body from shearing forces during rotation. The polypeptide is Flagellar P-ring protein (Pseudomonas syringae pv. tomato (strain ATCC BAA-871 / DC3000)).